Reading from the N-terminus, the 299-residue chain is tRNA dimethylallyltransferase (299 aa).

10–17 (GPTASGKS) lines the ATP pocket. 12 to 17 (TASGKS) provides a ligand contact to substrate.

Belongs to the IPP transferase family. As to quaternary structure, monomer. Mg(2+) is required as a cofactor.

The catalysed reaction is adenosine(37) in tRNA + dimethylallyl diphosphate = N(6)-dimethylallyladenosine(37) in tRNA + diphosphate. Functionally, catalyzes the transfer of a dimethylallyl group onto the adenine at position 37 in tRNAs that read codons beginning with uridine, leading to the formation of N6-(dimethylallyl)adenosine (i(6)A). This chain is tRNA dimethylallyltransferase, found in Malacoplasma penetrans (strain HF-2) (Mycoplasma penetrans).